The sequence spans 63 residues: Large ribosomal subunit protein uL29 (63 aa).

The protein belongs to the universal ribosomal protein uL29 family.

The polypeptide is Large ribosomal subunit protein uL29 (Shewanella oneidensis (strain ATCC 700550 / JCM 31522 / CIP 106686 / LMG 19005 / NCIMB 14063 / MR-1)).